Reading from the N-terminus, the 211-residue chain is Outer surface protein C (211 aa).

A signal peptide spans 1–18 (MKKNTLSAILMTLFLFIS). Cys-19 is lipidated: N-palmitoyl cysteine. Cys-19 carries S-diacylglycerol cysteine lipidation.

This sequence belongs to the OspC lipoprotein family. Homodimer. Interacts with tick I.ricinus salivary protein Iric-1, Iric-2 and Iric-3. Binds human (host) plasminogen.

The protein localises to the cell outer membrane. It localises to the cell surface. Major immunodominant protein in mammalian hosts. Required for initial stages of mammalian infection. Inhibits macrophage-mediated phagocytosis of the bacteria. Binds human plasminogen; this probably confers an extracellular protease activity on the bacteria that allows it to traverse tissue. Interaction with tick I.ricinus salivary protein Salp15 protects the bacteria from antibody-mediated killing in vitro and in vivo. The sequence is that of Outer surface protein C from Borreliella burgdorferi (Lyme disease spirochete).